We begin with the raw amino-acid sequence, 91 residues long: Small ribosomal subunit protein uS19 (91 aa).

Belongs to the universal ribosomal protein uS19 family.

Protein S19 forms a complex with S13 that binds strongly to the 16S ribosomal RNA. The protein is Small ribosomal subunit protein uS19 of Synechococcus sp. (strain CC9605).